Reading from the N-terminus, the 162-residue chain is Auracyanin-A (162 aa).

Positions 1–22 are cleaved as a signal peptide; it reads MKITLRMMVLAVLTAMAMVLAA. Residue Cys23 is the site of N-palmitoyl cysteine attachment. A lipid anchor (S-diacylglycerol cysteine) is attached at Cys23. The Plastocyanin-like domain occupies 42–162; that stretch reads VTIEIGSKGE…PLMQGKLVVN (121 aa). Cu cation contacts are provided by His81, Cys146, His151, and Met155.

In terms of assembly, monomer. Cu cation is required as a cofactor.

Its subcellular location is the cell membrane. In terms of biological role, probably a soluble electron acceptor for the integral membrane protein electron transfer alternative complex III (ACIII). The protein is Auracyanin-A of Chloroflexus aurantiacus (strain ATCC 29366 / DSM 635 / J-10-fl).